The sequence spans 511 residues: MAFSKKNNIFGSNNIFTILKTLKDESLLKENDSKNLEQKNNSFNVPKILNNVNISTNCEVNTSKILNYRGLTKGLKESNSTITNNGIFVDNKILISFDDIREMYSYYADYRIKLQYILLNRQKSILETIHSLDNKKGELFKMRFNYNEIVSNEFKIRKCIKLCMVYQNLIELYKLVLRLFDLLKIMTIDNGTNVIVMLNVSDLSIEKKKQFFESKQKIERYLVQTKNILNLLDGSFEKYKSTISQFLDYIDDTIKQFSTLSREETKILSSKTSEMFRQVDDYLRQIINDFDPHTNCEYYVSIDLENSNPINPVGIRHCTYIKCDSELNLAIKNKKIDKNILENISQEELEKLFTHVKRTNDDDFIRIYHGEPQMCPIININFFVENKIPLSGVSVGITNLPKNATILTSIINNHRQYNKYDDEIIPVPLYSNHMFETYVNNVLSDMTDDEYNNLNHFLKIKYNKEDTNNTKFIVDYLFEELADSSQESNLIKPEMFESFARLVQSNSYYGR.

This is an uncharacterized protein from Acanthamoeba polyphaga (Amoeba).